Consider the following 95-residue polypeptide: Aspartyl/glutamyl-tRNA(Asn/Gln) amidotransferase subunit C (95 aa).

Belongs to the GatC family. Heterotrimer of A, B and C subunits.

It carries out the reaction L-glutamyl-tRNA(Gln) + L-glutamine + ATP + H2O = L-glutaminyl-tRNA(Gln) + L-glutamate + ADP + phosphate + H(+). It catalyses the reaction L-aspartyl-tRNA(Asn) + L-glutamine + ATP + H2O = L-asparaginyl-tRNA(Asn) + L-glutamate + ADP + phosphate + 2 H(+). Functionally, allows the formation of correctly charged Asn-tRNA(Asn) or Gln-tRNA(Gln) through the transamidation of misacylated Asp-tRNA(Asn) or Glu-tRNA(Gln) in organisms which lack either or both of asparaginyl-tRNA or glutaminyl-tRNA synthetases. The reaction takes place in the presence of glutamine and ATP through an activated phospho-Asp-tRNA(Asn) or phospho-Glu-tRNA(Gln). This Chlorobium chlorochromatii (strain CaD3) protein is Aspartyl/glutamyl-tRNA(Asn/Gln) amidotransferase subunit C.